Here is a 752-residue protein sequence, read N- to C-terminus: MPTETNQNTTQYDLFVSCSQGWEGLLQTELEQLAVGDVKPGHAGVYVSATLEQMYKICLWTRLATKVLLPLDSGPIETGDDVHTVASKVDWPSLMKPGASLKVDFIGTNDAVRNTQFGAQRVKDAVVDSIRHAGGERPNVEKMQPDVRIHARLHRDELHISIDLSGDSLHRRGYRQKQGGAPLKENLAAALLLRAGWPTIAEQGGALLDPMCGSGTLLIEGALIAYSIAPGLSRDKFGFECWTGHNADTWAQVVNDAKAIRDKNLQEKSFDIFGYDSDYYVTKAAEMNCEALGLQNVIHIANKPVEELKQPTHKVLVPGLVIVNPPYGERLGEVNELRTTYQILAHQVKQQFEGWTFAVFTSNPELAKETRLRANKKNKFKNGALPAELFVYSVLSADDAKLRKDKLTQAVQTDEDGQVENASGAWVRKNLCDKPLTEAATMVANRIKKNLKRLKKSVKQNDWHGYRVYDADMPEYSAAIDLYNDQVHIQEYAAPKTIDADKAEARFETLKHGAAVALQAPDNKLFVKTRKRNKGKAQYEKQTDTQGFDAERCIQVQEGNAKLWVNLQDYLDTGLFLDHRPLRMRIHKEATGKRFLNLFCYTATASVQAALGGATESVSVDMSNTYLEWADNNFRLNNVHLARHRLVRADCFDWLNKCREGFDLIMLDPPTFSNSKKMSDVLDIQKDQVRLISRCMDILNPGGTLYFSTNFRQFKLDEQISTRYVVENISAATIDEDFKGNPKIHYCWKIQH.

Residues 53-164 (QMYKICLWTR…RDELHISIDL (112 aa)) form the THUMP domain.

Belongs to the methyltransferase superfamily. RlmKL family.

It localises to the cytoplasm. It catalyses the reaction guanosine(2445) in 23S rRNA + S-adenosyl-L-methionine = N(2)-methylguanosine(2445) in 23S rRNA + S-adenosyl-L-homocysteine + H(+). The catalysed reaction is guanosine(2069) in 23S rRNA + S-adenosyl-L-methionine = N(2)-methylguanosine(2069) in 23S rRNA + S-adenosyl-L-homocysteine + H(+). In terms of biological role, specifically methylates the guanine in position 2445 (m2G2445) and the guanine in position 2069 (m7G2069) of 23S rRNA. The polypeptide is Ribosomal RNA large subunit methyltransferase K/L (Saccharophagus degradans (strain 2-40 / ATCC 43961 / DSM 17024)).